Consider the following 501-residue polypeptide: Glucose-6-phosphate isomerase (501 aa).

Residues 78-101 (GIANPTENRAAEHSAERGDGAPES) are disordered. Basic and acidic residues predominate over residues 86 to 97 (RAAEHSAERGDG). Glu-333 serves as the catalytic Proton donor. Catalysis depends on residues His-364 and Lys-474.

This sequence belongs to the GPI family.

Its subcellular location is the cytoplasm. The catalysed reaction is alpha-D-glucose 6-phosphate = beta-D-fructose 6-phosphate. The protein operates within carbohydrate biosynthesis; gluconeogenesis. It participates in carbohydrate degradation; glycolysis; D-glyceraldehyde 3-phosphate and glycerone phosphate from D-glucose: step 2/4. Its function is as follows. Catalyzes the reversible isomerization of glucose-6-phosphate to fructose-6-phosphate. The chain is Glucose-6-phosphate isomerase from Sphingopyxis alaskensis (strain DSM 13593 / LMG 18877 / RB2256) (Sphingomonas alaskensis).